A 62-amino-acid chain; its full sequence is Large ribosomal subunit protein bL28 (62 aa).

It belongs to the bacterial ribosomal protein bL28 family.

The sequence is that of Large ribosomal subunit protein bL28 from Acetivibrio thermocellus (strain ATCC 27405 / DSM 1237 / JCM 9322 / NBRC 103400 / NCIMB 10682 / NRRL B-4536 / VPI 7372) (Clostridium thermocellum).